The following is a 601-amino-acid chain: Kelch-like ECH-associated protein 1A (601 aa).

The BTB domain maps to 44 to 117 (MDELRHHEML…VISRLIDFAY (74 aa)). Residues 153–253 (KNLEPSNVIG…LNAVHIYALP (101 aa)) enclose the BACK domain. 6 Kelch repeats span residues 292–337 (PTPH…PCSG), 338–388 (LGAC…PRNR), 389–435 (VGVG…ARLG), 436–482 (AGVA…VRSG), 484–529 (GVVC…CRSA), and 530–576 (HGVS…GRSG).

This sequence belongs to the KEAP1 family. As to quaternary structure, homodimer and heterodimer; heterodimerizes with keap1b. Component of the BCR(KEAP1) E3 ubiquitin ligase complex, at least composed of 2 molecules of cul3, 2 molecules of keap1 (keap1a and/or keap1b), and rbx1. Interacts with nfe2l2/nrf2; the interaction is direct. In terms of processing, non-enzymatic covalent modifications of reactive cysteines by electrophile metabolites inactivate the BCR(KEAP1) complex. As to expression, widely expressed.

The protein resides in the cytoplasm. The protein localises to the nucleus. It functions in the pathway protein modification; protein ubiquitination. With respect to regulation, ubiquitin ligase activity of the BCR(KEAP1) complex is inhibited by oxidative stress and electrophile metabolites such as sulforaphane. Electrophile metabolites react with reactive cysteine residues in keap1 and trigger non-enzymatic covalent modifications of these cysteine residues, leading to inactivate the ubiquitin ligase activity of the BCR(KEAP1) complex. Its function is as follows. Substrate-specific adapter of a BCR (BTB-CUL3-RBX1) E3 ubiquitin ligase complex that regulates the response to oxidative stress by targeting nfe2l2/nrf2 for ubiquitination. Keap1 acts as a key sensor of oxidative and electrophilic stress: in normal conditions, the BCR(KEAP1) complex mediates ubiquitination and degradation of nfe2l2/nrf2, a transcription factor regulating expression of many cytoprotective genes. In response to oxidative stress, different electrophile metabolites trigger non-enzymatic covalent modifications of highly reactive cysteine residues in KEAP1, leading to inactivate the ubiquitin ligase activity of the BCR(KEAP1) complex, promoting nfe2l2/nrf2 nuclear accumulation and expression of phase II detoxifying enzymes. This chain is Kelch-like ECH-associated protein 1A, found in Danio rerio (Zebrafish).